A 520-amino-acid chain; its full sequence is Pleckstrin homology domain-containing family O member 1-A (520 aa).

Disordered stretches follow at residues 1-23 (MKKS…QPDK), 208-296 (SLDK…GHLQ), 313-439 (IQEQ…KSTD), and 497-520 (QARQ…QKSP). Positions 20 to 131 (QPDKVGWIRR…WINVLNTAIT (112 aa)) constitute a PH domain. A compositionally biased stretch (polar residues) spans 227–241 (PASNTEAQEKTSSLP). Basic and acidic residues-rich tracts occupy residues 242 to 255 (RKSE…DHPR) and 333 to 347 (DSPR…DSPH). Positions 348–361 (SKGSSSPHSANSPS) are enriched in low complexity. Basic and acidic residues-rich tracts occupy residues 363–385 (RAKD…DSPR) and 396–418 (KSID…DLTH). Polar residues predominate over residues 420-439 (KGSQSPLSTGSNSPHMKSTD). The span at 497 to 506 (QARQRREELS) shows a compositional bias: basic and acidic residues. Polar residues predominate over residues 509–520 (GMASQKLQQKSP).

Post-translationally, C-terminal fragments could be released during apoptosis via caspase-3-dependent cleavage.

The protein localises to the membrane. The protein resides in the nucleus. It is found in the cytoplasm. In terms of biological role, plays a role in the regulation of the actin cytoskeleton through its interactions with actin capping protein (CP). The protein is Pleckstrin homology domain-containing family O member 1-A (plekho1a) of Danio rerio (Zebrafish).